Here is a 264-residue protein sequence, read N- to C-terminus: Small ribosomal subunit protein mS23 (264 aa).

Positions 233-264 (ARTSNPAGSWKDDTTLNTAQEEESTTSENLHF) are disordered.

Belongs to the mitochondrion-specific ribosomal protein mS23 family. As to quaternary structure, component of the mitochondrial small ribosomal subunit. Mature mitochondrial ribosomes consist of a small (37S) and a large (54S) subunit. The 37S subunit contains at least 33 different proteins and 1 molecule of RNA (15S). The 54S subunit contains at least 45 different proteins and 1 molecule of RNA (21S).

The protein resides in the mitochondrion. The polypeptide is Small ribosomal subunit protein mS23 (RSM25) (Saccharomyces cerevisiae (strain YJM789) (Baker's yeast)).